A 628-amino-acid polypeptide reads, in one-letter code: 2-oxoacid:ferredoxin oxidoreductase 2, subunit alpha (628 aa).

Residues 254-258 (YPITP) carry the YPITP motif motif. Substrate contacts are provided by Thr-257 and Arg-344.

Heterodimer composed of an alpha and a beta subunit.

The enzyme catalyses a 2-oxocarboxylate + 2 oxidized [2Fe-2S]-[ferredoxin] + CoA = an acyl-CoA + 2 reduced [2Fe-2S]-[ferredoxin] + CO2 + H(+). Its function is as follows. Catalyzes the coenzyme A-dependent oxidative decarboxylation of different 2-oxoacids such as 2-oxoglutarate, pyruvate and 2-oxobutyrate to form their CoA derivatives. In Sulfurisphaera tokodaii (strain DSM 16993 / JCM 10545 / NBRC 100140 / 7) (Sulfolobus tokodaii), this protein is 2-oxoacid:ferredoxin oxidoreductase 2, subunit alpha.